The following is a 369-amino-acid chain: Delta(6)-protoilludene synthase STEHIDRAFT_73029 (369 aa).

Positions 107, 243, 247, and 251 each coordinate Mg(2+). The D(D/E)XX(D/E) motif motif lies at 107–111 (DEYSD). An NSE motif motif is present at residues 243-251 (NDIVSYNLE). Residues Arg-333 and Tyr-334 each contribute to the (2E,6E)-farnesyl diphosphate site.

This sequence belongs to the terpene synthase family. Mg(2+) is required as a cofactor. Mn(2+) serves as cofactor. Requires Ca(2+) as cofactor. The cofactor is Ni(2+). It depends on Co(2+) as a cofactor.

The enzyme catalyses (2E,6E)-farnesyl diphosphate = Delta(6)-protoilludene + diphosphate. It carries out the reaction (2E,6E)-farnesyl diphosphate = alpha-selinene + diphosphate. Ca(2+) switches the cyclization mechanism of delta(6)-protoilludene synthase from 1,11 to 1,10 cyclization which leads to the production of beta-elemene. Functionally, terpene cyclase that catalyzes the cyclization of farnesyl diphosphate (FPP) to delta(6)-protoilludene. In presence of Ca(2+), a significant switch from 1,11 to a dual 1,11/1,10 cyclization occurs, producing beta-elemene as the major product, with lower levels of delta(6)-protoilludene and (E)-beta-caryophyllene, and traces of beta-selinene and alpha-selinene. This is Delta(6)-protoilludene synthase STEHIDRAFT_73029 from Stereum hirsutum (strain FP-91666) (White-rot fungus).